Reading from the N-terminus, the 570-residue chain is Periplasmic trehalase (570 aa).

The signal sequence occupies residues 1-34; it reads MIPPEIRRSVLLQKAIKLALAGTLLTFASFSATA. Substrate-binding positions include Arg159, 166-167, Asn203, 212-214, 284-286, and Gly317; these read WD, RSQ, and RPE. Catalysis depends on proton donor/acceptor residues Asp319 and Glu503. Glu518 lines the substrate pocket. A disordered region spans residues 545–570; the sequence is PCDSVPSTRPASLSATPTKTPSAATQ. A compositionally biased stretch (low complexity) spans 554 to 570; that stretch reads PASLSATPTKTPSAATQ.

Belongs to the glycosyl hydrolase 37 family. In terms of assembly, monomer.

The protein localises to the periplasm. The catalysed reaction is alpha,alpha-trehalose + H2O = alpha-D-glucose + beta-D-glucose. Its function is as follows. Provides the cells with the ability to utilize trehalose at high osmolarity by splitting it into glucose molecules that can subsequently be taken up by the phosphotransferase-mediated uptake system. The polypeptide is Periplasmic trehalase (Salmonella agona (strain SL483)).